Here is a 37-residue protein sequence, read N- to C-terminus: Large ribosomal subunit protein bL36 (37 aa).

The protein belongs to the bacterial ribosomal protein bL36 family.

The sequence is that of Large ribosomal subunit protein bL36 from Acetivibrio thermocellus (strain ATCC 27405 / DSM 1237 / JCM 9322 / NBRC 103400 / NCIMB 10682 / NRRL B-4536 / VPI 7372) (Clostridium thermocellum).